The following is a 962-amino-acid chain: Glycine dehydrogenase (decarboxylating) (962 aa).

Lysine 709 is modified (N6-(pyridoxal phosphate)lysine).

It belongs to the GcvP family. In terms of assembly, the glycine cleavage system is composed of four proteins: P, T, L and H. Pyridoxal 5'-phosphate serves as cofactor.

It catalyses the reaction N(6)-[(R)-lipoyl]-L-lysyl-[glycine-cleavage complex H protein] + glycine + H(+) = N(6)-[(R)-S(8)-aminomethyldihydrolipoyl]-L-lysyl-[glycine-cleavage complex H protein] + CO2. Its function is as follows. The glycine cleavage system catalyzes the degradation of glycine. The P protein binds the alpha-amino group of glycine through its pyridoxal phosphate cofactor; CO(2) is released and the remaining methylamine moiety is then transferred to the lipoamide cofactor of the H protein. The polypeptide is Glycine dehydrogenase (decarboxylating) (Shewanella oneidensis (strain ATCC 700550 / JCM 31522 / CIP 106686 / LMG 19005 / NCIMB 14063 / MR-1)).